The following is a 172-amino-acid chain: Large ribosomal subunit protein uL10 (172 aa).

It belongs to the universal ribosomal protein uL10 family. Part of the ribosomal stalk of the 50S ribosomal subunit. The N-terminus interacts with L11 and the large rRNA to form the base of the stalk. The C-terminus forms an elongated spine to which L12 dimers bind in a sequential fashion forming a multimeric L10(L12)X complex.

Forms part of the ribosomal stalk, playing a central role in the interaction of the ribosome with GTP-bound translation factors. In Rhodopseudomonas palustris (strain BisB5), this protein is Large ribosomal subunit protein uL10.